The chain runs to 64 residues: uncharacterized protein (64 aa).

Residues 41 to 61 traverse the membrane as a helical segment; the sequence is VFLALKVLGIMVLFYLLDAII.

Its subcellular location is the membrane. This is an uncharacterized protein from Acheta domesticus (House cricket).